The primary structure comprises 557 residues: Inositol-3-phosphate synthase 1 (557 aa).

Residues Gly67, Gly68, Asn69, Asn70, Asp141, Ser177, Val178, Gln188, Arg191, Thr228, Ala229, Asn230, Thr231, Gly278, Ser279, Asp303, Ser306, Asn337, Asn338, Asp339, and Lys352 each contribute to the NAD(+) site. Residue Ser279 is modified to Phosphoserine. Ser357 carries the phosphoserine modification. Gly390, Asp391, Asp419, and Ser420 together coordinate NAD(+). Phosphoserine is present on Ser523. The interval 527 to 557 (CKKGSAPTAPNGCTGDANGHSQAEAPQMPTT) is disordered.

This sequence belongs to the myo-inositol 1-phosphate synthase family. NAD(+) serves as cofactor. Expressed in testis (at protein level).

It localises to the cytoplasm. It carries out the reaction D-glucose 6-phosphate = 1D-myo-inositol 3-phosphate. Its pathway is polyol metabolism; myo-inositol biosynthesis; myo-inositol from D-glucose 6-phosphate: step 1/2. In terms of biological role, key enzyme in myo-inositol biosynthesis pathway that catalyzes the conversion of glucose 6-phosphate to 1-myo-inositol 1-phosphate in a NAD-dependent manner. Rate-limiting enzyme in the synthesis of all inositol-containing compounds. In Bos taurus (Bovine), this protein is Inositol-3-phosphate synthase 1 (ISYNA1).